Consider the following 189-residue polypeptide: GMP synthase [glutamine-hydrolyzing] subunit A (189 aa).

The Glutamine amidotransferase type-1 domain maps to 1-189 (MIVILNNGGQ…CKVCGFKFNE (189 aa)). Cysteine 76 functions as the Nucleophile in the catalytic mechanism. Catalysis depends on residues histidine 163 and glutamate 165.

In terms of assembly, heterodimer composed of a glutamine amidotransferase subunit (A) and a GMP-binding subunit (B).

It carries out the reaction XMP + L-glutamine + ATP + H2O = GMP + L-glutamate + AMP + diphosphate + 2 H(+). It functions in the pathway purine metabolism; GMP biosynthesis; GMP from XMP (L-Gln route): step 1/1. Its function is as follows. Catalyzes the synthesis of GMP from XMP. This Methanococcus vannielii (strain ATCC 35089 / DSM 1224 / JCM 13029 / OCM 148 / SB) protein is GMP synthase [glutamine-hydrolyzing] subunit A.